The following is a 370-amino-acid chain: A-type ATP synthase subunit C (370 aa).

It belongs to the V-ATPase V0D/AC39 subunit family. Has multiple subunits with at least A(3), B(3), C, D, E, F, H, I and proteolipid K(x).

The protein resides in the cell membrane. Its function is as follows. Component of the A-type ATP synthase that produces ATP from ADP in the presence of a proton gradient across the membrane. The protein is A-type ATP synthase subunit C of Pyrococcus furiosus (strain ATCC 43587 / DSM 3638 / JCM 8422 / Vc1).